A 428-amino-acid polypeptide reads, in one-letter code: Histidine--tRNA ligase (428 aa).

This sequence belongs to the class-II aminoacyl-tRNA synthetase family. Homodimer.

The protein resides in the cytoplasm. The enzyme catalyses tRNA(His) + L-histidine + ATP = L-histidyl-tRNA(His) + AMP + diphosphate + H(+). The chain is Histidine--tRNA ligase from Lactobacillus delbrueckii subsp. bulgaricus (strain ATCC 11842 / DSM 20081 / BCRC 10696 / JCM 1002 / NBRC 13953 / NCIMB 11778 / NCTC 12712 / WDCM 00102 / Lb 14).